The following is a 226-amino-acid chain: ATP synthase subunit a (226 aa).

Helical transmembrane passes span 18–38, 74–94, 100–120, 162–182, and 187–207; these read LSLN…TYWL, FVSL…PYIF, LTLT…YGWI, LTAN…TGPM, and IILS…SAVA.

The protein belongs to the ATPase A chain family. F-type ATPases have 2 components, CF(1) - the catalytic core - and CF(0) - the membrane proton channel. CF(1) has five subunits: alpha(3), beta(3), gamma(1), delta(1), epsilon(1). CF(0) has three main subunits: a, b and c.

The protein localises to the mitochondrion inner membrane. In terms of biological role, mitochondrial membrane ATP synthase (F(1)F(0) ATP synthase or Complex V) produces ATP from ADP in the presence of a proton gradient across the membrane which is generated by electron transport complexes of the respiratory chain. F-type ATPases consist of two structural domains, F(1) - containing the extramembraneous catalytic core and F(0) - containing the membrane proton channel, linked together by a central stalk and a peripheral stalk. During catalysis, ATP synthesis in the catalytic domain of F(1) is coupled via a rotary mechanism of the central stalk subunits to proton translocation. Key component of the proton channel; it may play a direct role in the translocation of protons across the membrane. The protein is ATP synthase subunit a of Aedes aegypti (Yellowfever mosquito).